The sequence spans 752 residues: Multifunctional tryptophan biosynthesis protein (752 aa).

A Glutamine amidotransferase type-1 domain is found at 3 to 202 (FTLLIDNYDS…IQMKGGKWGG (200 aa)). Position 58 to 60 (58 to 60 (GPG)) interacts with L-glutamine. The active-site Nucleophile; for GATase activity is the Cys-86. L-glutamine is bound at residue 136–137 (SL). Catalysis depends on for GATase activity residues His-176 and Glu-178. Positions 231–495 (ILNKIHAQRL…DTKAFLRSLI (265 aa)) are indole-3-glycerol phosphate synthase. The segment at 509–752 (LVKICGIRST…VEAFVKAVRG (244 aa)) is N-(5'-phosphoribosyl)anthranilate isomerase.

It carries out the reaction N-(5-phospho-beta-D-ribosyl)anthranilate = 1-(2-carboxyphenylamino)-1-deoxy-D-ribulose 5-phosphate. It catalyses the reaction 1-(2-carboxyphenylamino)-1-deoxy-D-ribulose 5-phosphate + H(+) = (1S,2R)-1-C-(indol-3-yl)glycerol 3-phosphate + CO2 + H2O. The enzyme catalyses chorismate + L-glutamine = anthranilate + pyruvate + L-glutamate + H(+). Its pathway is amino-acid biosynthesis; L-tryptophan biosynthesis; L-tryptophan from chorismate: step 1/5. It functions in the pathway amino-acid biosynthesis; L-tryptophan biosynthesis; L-tryptophan from chorismate: step 3/5. The protein operates within amino-acid biosynthesis; L-tryptophan biosynthesis; L-tryptophan from chorismate: step 4/5. Its function is as follows. Trifunctional enzyme bearing the Gln amidotransferase (GATase) domain of anthranilate synthase, indole-glycerolphosphate synthase, and phosphoribosylanthranilate isomerase activities. In Cryptococcus neoformans var. grubii serotype A (strain H99 / ATCC 208821 / CBS 10515 / FGSC 9487) (Filobasidiella neoformans var. grubii), this protein is Multifunctional tryptophan biosynthesis protein (TRP1).